We begin with the raw amino-acid sequence, 226 residues long: RNA pyrophosphohydrolase (226 aa).

In terms of domain architecture, Nudix hydrolase spans 6–149 (GFRPNVGIIL…KRGVYEMALT (144 aa)). Residues 38 to 59 (GGIDRGETPEQAMFRELHEEVG) carry the Nudix box motif. The interval 197 to 226 (MELPPGASFDPDPRTGDGDPGMPGIHKPAG) is disordered.

This sequence belongs to the Nudix hydrolase family. RppH subfamily. A divalent metal cation serves as cofactor.

Accelerates the degradation of transcripts by removing pyrophosphate from the 5'-end of triphosphorylated RNA, leading to a more labile monophosphorylated state that can stimulate subsequent ribonuclease cleavage. The chain is RNA pyrophosphohydrolase from Paracidovorax citrulli (strain AAC00-1) (Acidovorax citrulli).